We begin with the raw amino-acid sequence, 664 residues long: UvrABC system protein B (664 aa).

In terms of domain architecture, Helicase ATP-binding spans 24 to 182 (AGLRAGYRHQ…QLIDLQFERN (159 aa)). Position 37–44 (37–44 (GATGTGKT)) interacts with ATP. A Beta-hairpin motif is present at residues 90–113 (YYDEYTPEAYVPSKDLYIEKEASI). The Helicase C-terminal domain occupies 427-593 (QIDDLLGEIR…GIAKGVRDLT (167 aa)). Residues 624–659 (LKLIKDLEKQMKQAAKALAFEKAAALRDQIVELRQA) enclose the UVR domain.

This sequence belongs to the UvrB family. As to quaternary structure, forms a heterotetramer with UvrA during the search for lesions. Interacts with UvrC in an incision complex.

The protein resides in the cytoplasm. The UvrABC repair system catalyzes the recognition and processing of DNA lesions. A damage recognition complex composed of 2 UvrA and 2 UvrB subunits scans DNA for abnormalities. Upon binding of the UvrA(2)B(2) complex to a putative damaged site, the DNA wraps around one UvrB monomer. DNA wrap is dependent on ATP binding by UvrB and probably causes local melting of the DNA helix, facilitating insertion of UvrB beta-hairpin between the DNA strands. Then UvrB probes one DNA strand for the presence of a lesion. If a lesion is found the UvrA subunits dissociate and the UvrB-DNA preincision complex is formed. This complex is subsequently bound by UvrC and the second UvrB is released. If no lesion is found, the DNA wraps around the other UvrB subunit that will check the other stand for damage. This is UvrABC system protein B from Chloroflexus aggregans (strain MD-66 / DSM 9485).